The chain runs to 357 residues: Carbamoyl phosphate synthase small chain (357 aa).

The segment at 1 to 168 (MSKRLLILED…STATAYPSPN (168 aa)) is CPSase. L-glutamine-binding residues include serine 46, glycine 220, and glycine 222. The Glutamine amidotransferase type-1 domain maps to 172-357 (KVVVVDFGLK…FMDLMDNFKK (186 aa)). Residue cysteine 247 is the Nucleophile of the active site. Residues leucine 248, glutamine 251, asparagine 289, glycine 291, and tyrosine 292 each coordinate L-glutamine. Active-site residues include histidine 331 and aspartate 333.

It belongs to the CarA family. In terms of assembly, composed of two chains; the small (or glutamine) chain promotes the hydrolysis of glutamine to ammonia, which is used by the large (or ammonia) chain to synthesize carbamoyl phosphate. Tetramer of heterodimers (alpha,beta)4.

It catalyses the reaction hydrogencarbonate + L-glutamine + 2 ATP + H2O = carbamoyl phosphate + L-glutamate + 2 ADP + phosphate + 2 H(+). It carries out the reaction L-glutamine + H2O = L-glutamate + NH4(+). The protein operates within amino-acid biosynthesis; L-arginine biosynthesis; carbamoyl phosphate from bicarbonate: step 1/1. Its pathway is pyrimidine metabolism; UMP biosynthesis via de novo pathway; (S)-dihydroorotate from bicarbonate: step 1/3. Small subunit of the glutamine-dependent carbamoyl phosphate synthetase (CPSase). CPSase catalyzes the formation of carbamoyl phosphate from the ammonia moiety of glutamine, carbonate, and phosphate donated by ATP, constituting the first step of 2 biosynthetic pathways, one leading to arginine and/or urea and the other to pyrimidine nucleotides. The small subunit (glutamine amidotransferase) binds and cleaves glutamine to supply the large subunit with the substrate ammonia. The protein is Carbamoyl phosphate synthase small chain of Lactococcus lactis subsp. cremoris (strain MG1363).